The sequence spans 448 residues: Tapasin (448 aa).

The N-terminal stretch at 1–20 is a signal peptide; sequence MKSLSLLLAVALGLATAVSA. At 21–414 the chain is on the lumenal side; it reads GPAVIECWFV…LSGPSLEDSV (394 aa). A disulfide bridge connects residues Cys27 and Cys91. N-linked (GlcNAc...) asparagine glycosylation is present at Asn253. The region spanning 292-399 is the Ig-like C1-type domain; that stretch reads PKVSLMPATL…PASGRSAEVT (108 aa). Cys315 and Cys382 are disulfide-bonded. A helical transmembrane segment spans residues 415-435; that stretch reads GLFLSAFLLLGLFKALGWAAV. Over 436 to 448 the chain is Cytoplasmic; it reads YLSTCKDSKKKAE.

In terms of assembly, heterodimer with PDIA3; disulfide-linked. Obligatory mediator for the interaction between newly assembled MHC class I molecules, calreticulin, PDIA3 and TAP. Up to 4 MHC class I/tapasin complexes bind to 1 TAP. Interacts with HLA-G-B2M complex; this interaction is required for loading of high affinity peptides. On its own or as part of MHC class I peptide loading complex, interacts with ligand-free MR1 or MR1-B2M complex, providing for stable MR1 pools ready for metabolite antigen processing. As to expression, neutrophils, mostly in fully differentiated cells.

Its subcellular location is the endoplasmic reticulum membrane. In terms of biological role, involved in the association of MHC class I with transporter associated with antigen processing (TAP) and in the assembly of MHC class I with peptide (peptide loading). This is Tapasin from Homo sapiens (Human).